A 1616-amino-acid polypeptide reads, in one-letter code: MARGGSRRRNTSVISTQKIEPSNESTKAPEGPQKRKPKTEIPNSNGNGVIKKEIKKRKLDNELDESQEHLAQLITDFNLSVNELFQLKEYKTIAYWNPDDFSRASSTSQVPEIFDLFSKEPEYQISWGADSNEQDLSNIPLRLQKKIINEREQKLLEKFPFKEKVLKRSRDLEIELLQNIRQSKKTLEKSHIKPSPPVKPSKTSKGNQKIIKKKQVVKQEEEEAQENHQNEEYESDMDEGTHYKLKAVKYSIPPPIVTHPSHIPSWVPDPNHTESSFNSKDSEIIDYHPDAIQFVSNSKTTYTTPNIQAKIQNFLASYKSAIIDETSSGDFNNTLEEYEKIMTQQEQFIKKLYEKTSIEKRLELNGEKIERRKTVLPHSSNTKQAVDPFRSHGAIIPKTQGVTIHSTHHDYFLSHGMAFSRLHQQMRRQHQLRTKKITQMIEQHFKKKKGEKERLAKEKEQNLKRISKMAVQAVKKRWIQASKVYRFLQLQKEEELKKIKGREHLSQMLEHSTQLLEAQFNKSSRDISEVDTENENETDDHLSSSSDEDSGSPQNARDDSNVNMDENDMQLTVEELRAKYADIDQSIEPSSKTISSDSSNHESDSDDEDIDANKGLVALYGNNAVSVEPVSSLAATEYTDEQKTLIEKFSKEDEGISSESVSDDSLNDSSSSESDDDSEVDESNHKQVDSTKPTGLAALLGNGPTEDEEDSNDDVSADSDGNVSDDENMSTTDEEDEPKTPKSSEDPKMDEKENESDVLEEEVNGSKVRDVPLPPLLRGTLRPYQKQGLNWLASLYNNGTNGILADEMGLGKTIQTISLLAYLAAEHHIWGPHLIVVPTSVMLNWEMEFKKFAPGFKVLTYYGSPQQRAQKRKGWNKPNAFHVCITSYQLVVHDHQSFKRRRWRYMILDEAHNIKNFRSARWRALLNFNTENRLLLTGTPLQNNLMELWSLLYFLMPSSKVNQAMPDGFANLEDFQTWFGRPVDKILEKTSNGTSSDVIDENDKTTQRMDEETRNTVSRLHQVLRPYLLRRLKKDVEKQMPGKYEHIIYCRLSKRQRYLYDDFMSRAQTKETLASGNFLSIINCLMQLRKVCNHPDLFEVRPIVTSLAMPRCVANSFASTDSVVRKYLNDDSFKGQVSLKALNLDITSLDQLNYFTSQTTSKLKSSSELDKQADKLNELISASEYDQPNLDNFLEYYKFIKSNEQVGIRDNLKHASYLNSLRCDRIPLLGESVIKFLQTATQPRQPFTDAYNDIILSIPKRVEKMDDVIEKYSVLTPSVVTLDLKDQLIPLSTQRTIMNEVANKNIDNPFHKSQVKLSIAFPDKSLLQFDCGKLQKLATLLQDLTANGHRALIFTQMTKVLDILEQFLNIHGYRYMRLDGATKIEDRQLLTEKFNRDSKIPVFILSTRSGGLGINLTGADTVIFYDSDWNPAMDKQCQDRCHRIGQSRDVHIYRFVSEYTIESNILRKANQKRQLDNVVIQEGEFTTDYFGKFSVKDLVNDAEVADIPDKPLEPAYGNVENVLAQAEDEDDRVAANAAMKEVAIDDEDFDEESKAATNTATPSQTPGPDTAGSGIVDSTVKINNKTDSLEDVDYEDGVSHVDEYMLRFIANGYYWD.

Basic residues predominate over residues 1-10 (MARGGSRRRN). Disordered stretches follow at residues 1–53 (MARG…IKKE) and 185–238 (KTLE…SDMD). Polar residues predominate over residues 11–26 (TSVISTQKIEPSNEST). Over residues 200-209 (PSKTSKGNQK) the composition is skewed to low complexity. In terms of domain architecture, HSA spans 396–468 (IPKTQGVTIH…KEQNLKRISK (73 aa)). Disordered stretches follow at residues 521–565 (NKSS…VNMD), 583–614 (IDQSIEPSSKTISSDSSNHESDSDDEDIDANK), and 645–774 (LIEK…VPLP). Residues 529-538 (EVDTENENET) are compositionally biased toward acidic residues. Over residues 645 to 654 (LIEKFSKEDE) the composition is skewed to basic and acidic residues. Over residues 705 to 737 (TEDEEDSNDDVSADSDGNVSDDENMSTTDEEDE) the composition is skewed to acidic residues. Residues 738–751 (PKTPKSSEDPKMDE) show a composition bias toward basic and acidic residues. Residues 752 to 763 (KENESDVLEEEV) are compositionally biased toward acidic residues. Residues 793–958 (ASLYNNGTNG…WSLLYFLMPS (166 aa)) enclose the Helicase ATP-binding domain. 806–813 (DEMGLGKT) lines the ATP pocket. A DEAH box motif is present at residues 909–912 (DEAH). The segment at 992–1013 (NGTSSDVIDENDKTTQRMDEET) is disordered. Positions 1001-1013 (ENDKTTQRMDEET) are enriched in basic and acidic residues. The Helicase C-terminal domain maps to 1333–1486 (KLQKLATLLQ…NVVIQEGEFT (154 aa)). Residues 1545–1576 (DDEDFDEESKAATNTATPSQTPGPDTAGSGIV) are disordered. Residues 1555-1567 (AATNTATPSQTPG) are compositionally biased toward polar residues.

This sequence belongs to the SNF2/RAD54 helicase family. SWR1 subfamily. As to quaternary structure, component of the SWR1 chromatin-remodeling complex.

Its subcellular location is the nucleus. It carries out the reaction ATP + H2O = ADP + phosphate + H(+). Catalytic component of the SWR1 complex which mediates the ATP-dependent exchange of histone H2A for the H2A variant HZT1 leading to transcriptional regulation of selected genes by chromatin remodeling. This chain is Helicase SWR1 (SWR1), found in Debaryomyces hansenii (strain ATCC 36239 / CBS 767 / BCRC 21394 / JCM 1990 / NBRC 0083 / IGC 2968) (Yeast).